Here is a 562-residue protein sequence, read N- to C-terminus: mRNA cleavage and polyadenylation factor CLP1 (562 aa).

The segment at 1–27 (MSLPGLELSQQPIEARRAPPQPTQISL) is disordered. ATP contacts are provided by residues Glu-32, Lys-71, and 154–159 (DAGKTS). The tract at residues 415–483 (EDEYDPSKFD…STTPFTNLPS (69 aa)) is disordered. The segment covering 445–479 (SLQPPSGLLPGLRSELPSATTGFPSASTSSTTPFT) has biased composition (low complexity).

Belongs to the Clp1 family. Clp1 subfamily. In terms of assembly, component of a pre-mRNA cleavage factor complex. Interacts directly with PCF11.

It is found in the nucleus. Its function is as follows. Required for endonucleolytic cleavage during polyadenylation-dependent pre-mRNA 3'-end formation. This is mRNA cleavage and polyadenylation factor CLP1 from Coccidioides immitis (strain RS) (Valley fever fungus).